The primary structure comprises 91 residues: Small ribosomal subunit protein uS19 (91 aa).

Belongs to the universal ribosomal protein uS19 family.

In terms of biological role, protein S19 forms a complex with S13 that binds strongly to the 16S ribosomal RNA. This is Small ribosomal subunit protein uS19 from Bordetella avium (strain 197N).